The following is a 268-amino-acid chain: Adenosylcobinamide-GDP ribazoletransferase (268 aa).

8 helical membrane passes run 1-21, 36-56, 59-79, 112-132, 138-158, 182-202, 212-232, and 244-264; these read MAGN…TLPV, YLFI…GTLF, ILPA…LTGI, AGGL…AMTF, WLFV…ITII, LAAV…AAII, IMAG…ILII, and VIGA…GAVL.

It belongs to the CobS family. Requires Mg(2+) as cofactor.

Its subcellular location is the cell membrane. The catalysed reaction is alpha-ribazole + adenosylcob(III)inamide-GDP = adenosylcob(III)alamin + GMP + H(+). It carries out the reaction alpha-ribazole 5'-phosphate + adenosylcob(III)inamide-GDP = adenosylcob(III)alamin 5'-phosphate + GMP + H(+). It participates in cofactor biosynthesis; adenosylcobalamin biosynthesis; adenosylcobalamin from cob(II)yrinate a,c-diamide: step 7/7. Its function is as follows. Joins adenosylcobinamide-GDP and alpha-ribazole to generate adenosylcobalamin (Ado-cobalamin). Also synthesizes adenosylcobalamin 5'-phosphate from adenosylcobinamide-GDP and alpha-ribazole 5'-phosphate. The protein is Adenosylcobinamide-GDP ribazoletransferase of Methanocella arvoryzae (strain DSM 22066 / NBRC 105507 / MRE50).